A 261-amino-acid polypeptide reads, in one-letter code: Imidazole glycerol phosphate synthase subunit HisF (261 aa).

Residues Asp11 and Asp130 contribute to the active site.

This sequence belongs to the HisA/HisF family. Heterodimer of HisH and HisF.

The protein resides in the cytoplasm. It catalyses the reaction 5-[(5-phospho-1-deoxy-D-ribulos-1-ylimino)methylamino]-1-(5-phospho-beta-D-ribosyl)imidazole-4-carboxamide + L-glutamine = D-erythro-1-(imidazol-4-yl)glycerol 3-phosphate + 5-amino-1-(5-phospho-beta-D-ribosyl)imidazole-4-carboxamide + L-glutamate + H(+). It participates in amino-acid biosynthesis; L-histidine biosynthesis; L-histidine from 5-phospho-alpha-D-ribose 1-diphosphate: step 5/9. Its function is as follows. IGPS catalyzes the conversion of PRFAR and glutamine to IGP, AICAR and glutamate. The HisF subunit catalyzes the cyclization activity that produces IGP and AICAR from PRFAR using the ammonia provided by the HisH subunit. This chain is Imidazole glycerol phosphate synthase subunit HisF, found in Limosilactobacillus fermentum (strain NBRC 3956 / LMG 18251) (Lactobacillus fermentum).